The sequence spans 182 residues: ADP-ribosylation factor 1 (182 aa).

The N-myristoyl glycine moiety is linked to residue Gly2. Residues 24-31 (GLDNAGKT), 67-71 (DLGGQ), and 126-129 (NKQD) each bind GTP.

The protein belongs to the small GTPase superfamily. Arf family.

The protein resides in the golgi apparatus. The enzyme catalyses GTP + H2O = GDP + phosphate + H(+). In terms of biological role, GTP-binding protein involved in protein trafficking; may modulate vesicle budding and uncoating within the Golgi apparatus. This Brassica rapa subsp. pekinensis (Chinese cabbage) protein is ADP-ribosylation factor 1 (ARF1).